The chain runs to 124 residues: Small ribosomal subunit protein eS25 (124 aa).

A compositionally biased stretch (basic and acidic residues) spans 1 to 22 (PPKDDKKKKDAGKSAKKDKDPV). Positions 1–37 (PPKDDKKKKDAGKSAKKDKDPVNKSGGKAKKKKWSKG) are disordered. A compositionally biased stretch (basic residues) spans 27-37 (GKAKKKKWSKG). Lys42 bears the N6-acetyllysine mark. Lys51 is modified (N6-acetyllysine; alternate). Residue Lys51 is modified to N6-succinyllysine; alternate. An N6-acetyllysine mark is found at Lys59 and Lys65. An N6-acetyllysine; alternate modification is found at Lys93. An N6-succinyllysine; alternate modification is found at Lys93.

This sequence belongs to the eukaryotic ribosomal protein eS25 family. In terms of assembly, component of the small ribosomal subunit.

The protein localises to the cytoplasm. Functionally, component of the small ribosomal subunit. The ribosome is a large ribonucleoprotein complex responsible for the synthesis of proteins in the cell. This chain is Small ribosomal subunit protein eS25 (RPS25), found in Oryctolagus cuniculus (Rabbit).